The chain runs to 189 residues: Large ribosomal subunit protein bL9 (189 aa).

It belongs to the bacterial ribosomal protein bL9 family.

In terms of biological role, binds to the 23S rRNA. This is Large ribosomal subunit protein bL9 from Brucella anthropi (strain ATCC 49188 / DSM 6882 / CCUG 24695 / JCM 21032 / LMG 3331 / NBRC 15819 / NCTC 12168 / Alc 37) (Ochrobactrum anthropi).